A 324-amino-acid polypeptide reads, in one-letter code: D-alanine--D-alanine ligase (324 aa).

The ATP-grasp domain maps to 116–311 (KQVWHTLGIP…FQQLVLAILA (196 aa)). 142–197 (ATELGFPLIVKPAHEGSSIGMAKVSSASELIDAWKAASTYDSQVLVEQWIHGPEFT) lines the ATP pocket. The Mg(2+) site is built by aspartate 265, glutamate 278, and asparagine 280.

This sequence belongs to the D-alanine--D-alanine ligase family. The cofactor is Mg(2+). Mn(2+) is required as a cofactor.

The protein localises to the cytoplasm. The enzyme catalyses 2 D-alanine + ATP = D-alanyl-D-alanine + ADP + phosphate + H(+). It participates in cell wall biogenesis; peptidoglycan biosynthesis. Its function is as follows. Cell wall formation. The polypeptide is D-alanine--D-alanine ligase (Pseudomonas fluorescens (strain Pf0-1)).